The chain runs to 367 residues: dTDP-4-amino-4,6-dideoxy-D-glucose transaminase (367 aa).

Lysine 184 bears the N6-(pyridoxal phosphate)lysine mark.

Belongs to the DegT/DnrJ/EryC1 family. It depends on pyridoxal 5'-phosphate as a cofactor.

It carries out the reaction dTDP-4-amino-4,6-dideoxy-D-glucose + 2-oxoglutarate = dTDP-4-dehydro-6-deoxy-alpha-D-glucose + L-glutamate. Its pathway is bacterial outer membrane biogenesis; lipopolysaccharide biosynthesis. In terms of biological role, catalyzes the conversion of dTDP-4-dehydro-6-deoxy-D-glucose (dTDP-D-Glc4O) to dTDP-4-amino-4,6-dideoxy-D-glucose (dTDP-D-Qui4N). L-glutamine can also be used as amino donor. The sequence is that of dTDP-4-amino-4,6-dideoxy-D-glucose transaminase (vioA) from Shigella dysenteriae.